The sequence spans 246 residues: tRNA (guanine-N(1)-)-methyltransferase (246 aa).

Residues glycine 112 and 131-136 (IGDYVL) each bind S-adenosyl-L-methionine.

The protein belongs to the RNA methyltransferase TrmD family. Homodimer.

It is found in the cytoplasm. The enzyme catalyses guanosine(37) in tRNA + S-adenosyl-L-methionine = N(1)-methylguanosine(37) in tRNA + S-adenosyl-L-homocysteine + H(+). In terms of biological role, specifically methylates guanosine-37 in various tRNAs. In Thermosipho melanesiensis (strain DSM 12029 / CIP 104789 / BI429), this protein is tRNA (guanine-N(1)-)-methyltransferase.